The sequence spans 493 residues: Glycerol kinase (493 aa).

ADP is bound at residue Thr12. Thr12, Thr13, and Ser14 together coordinate ATP. Thr12 serves as a coordination point for sn-glycerol 3-phosphate. Residue Arg16 coordinates ADP. Sn-glycerol 3-phosphate contacts are provided by Arg82, Glu83, Tyr132, and Asp239. Glycerol is bound by residues Arg82, Glu83, Tyr132, Asp239, and Gln240. Residues Thr261 and Gly303 each contribute to the ADP site. ATP contacts are provided by Thr261, Gly303, Gln307, and Gly402. ADP contacts are provided by Gly402 and Asn406.

The protein belongs to the FGGY kinase family.

It carries out the reaction glycerol + ATP = sn-glycerol 3-phosphate + ADP + H(+). The protein operates within polyol metabolism; glycerol degradation via glycerol kinase pathway; sn-glycerol 3-phosphate from glycerol: step 1/1. Its function is as follows. Key enzyme in the regulation of glycerol uptake and metabolism. Catalyzes the phosphorylation of glycerol to yield sn-glycerol 3-phosphate. The protein is Glycerol kinase of Thermococcus onnurineus (strain NA1).